The sequence spans 763 residues: DEK domain-containing chromatin-associated protein 3 (763 aa).

2 disordered regions span residues 1-324 (MGED…RERK) and 458-681 (TGDV…SDKV). Polar residues predominate over residues 11–20 (PTANKTTSLE). Composition is skewed to basic and acidic residues over residues 32–44 (AGGK…AKDE), 72–97 (SEVK…KDEG), 124–172 (TVMK…KANG), and 180–242 (DIKE…KVED). Positions 60–96 (KDDEKAETEDKESEVKKNEDNAETQKMEEKVEVTKDE) form a coiled coil. The stretch at 214-286 (GKEKEDKEEN…KEESKGSKKR (73 aa)) forms a coiled coil. Residues 243-252 (EKEGSEDEND) are compositionally biased toward acidic residues. Over residues 253–264 (NEKVESKDAKED) the composition is skewed to basic and acidic residues. The span at 265-277 (EKEETNDDKEDEK) shows a compositional bias: acidic residues. The short motif at 284-291 (KKRGKGTS) is the Nuclear localization signal 1 element. A compositionally biased stretch (basic and acidic residues) spans 295-311 (KVREKNKTEEVKKDAEP). Residues 475 to 484 (KGAKRKRTPK) show a composition bias toward basic residues. A Nuclear localization signal 2 motif is present at residues 483 to 490 (PKKTSPTA). Low complexity predominate over residues 485-496 (KTSPTAGSSSSK). Residues 513 to 551 (KKSLAHSDDESEEEKEEEEKQEEEKAEEKEEKKEEENEN) are a coiled coil. Acidic residues predominate over residues 521 to 533 (DESEEEKEEEEKQ). The span at 534–547 (EEEKAEEKEEKKEE) shows a compositional bias: basic and acidic residues. The segment covering 557 to 578 (SEDEAPQPSESEEKDESEEHSE) has biased composition (acidic residues). 2 stretches are compositionally biased toward low complexity: residues 606-615 (AVVAAKSSPP) and 650-660 (PIKASPAPSKS). Residues 661 to 681 (ASKEKPVKRAGKGKDKPSDKV) are compositionally biased toward basic and acidic residues. The region spanning 676-731 (KPSDKVLKNAIVEILKRVDFSTATFTDILKELAKEFTEDLTPRKSSIKMIIQEELT) is the DEK-C domain. 2 DNA-binding regions span residues 694 to 708 (DFST…KELA) and 723 to 727 (KMIIQ). Positions 723 to 753 (KMIIQEELTKLADEEEEEEKKEEDSEKEEAG) form a coiled coil. A disordered region spans residues 730-763 (LTKLADEEEEEEKKEEDSEKEEAGGSGGGEEVKA). Positions 753 to 763 (GGSGGGEEVKA) are enriched in gly residues.

Found in a mRNA splicing-dependent exon junction complex (EJC). Binds specifically histones H3 and H4. Interacts with TOP1A, SCC3, At1g61730, At1g20940, At1g13930, DEK4, HDT1, NIT1, SHL, CYP19-1, GEBPL, HSP70-3, PDP2, PDP3, KIN2, RPL11A and PDS5A. Highly expressed in young seedlings.

It localises to the nucleus. It is found in the nucleolus. Chromatin-associated protein which contributes to the modulation of chromatin structure (such as super-helical structure of DNA) and function. Binds to chromatin of protein-coding genes throughout the genome to regulate nucleosome occupancy and chromatin accessibility, and to modulate the expression of target genes. Negative regulator of stress tolerance (e.g. high salt). The chain is DEK domain-containing chromatin-associated protein 3 from Arabidopsis thaliana (Mouse-ear cress).